The primary structure comprises 352 residues: Adenosine deaminase (352 aa).

A2 carries the N-acetylalanine modification. Zn(2+)-binding residues include H15 and H17. Substrate contacts are provided by H17 and D19. The residue at position 54 (K54) is an N6-acetyllysine. G184 provides a ligand contact to substrate. H214 contacts Zn(2+). E217 (proton donor) is an active-site residue. K232 is subject to N6-acetyllysine. Residue D295 participates in Zn(2+) binding. Residue D296 coordinates substrate.

The protein belongs to the metallo-dependent hydrolases superfamily. Adenosine and AMP deaminases family. In terms of assembly, interacts with DPP4 (via extracellular domain). Interacts with PLG (via Kringle 4 domain); the interaction stimulates PLG activation when in complex with DPP4. Zn(2+) is required as a cofactor. In terms of tissue distribution, detected in brain and liver (at protein level).

The protein resides in the cell membrane. It localises to the cell junction. It is found in the cytoplasmic vesicle lumen. The protein localises to the cytoplasm. Its subcellular location is the lysosome. The catalysed reaction is adenosine + H2O + H(+) = inosine + NH4(+). The enzyme catalyses 2'-deoxyadenosine + H2O + H(+) = 2'-deoxyinosine + NH4(+). It carries out the reaction cordycepin + H2O + H(+) = 3'-deoxyinosine + NH4(+). Functionally, catalyzes the hydrolytic deamination of adenosine and 2-deoxyadenosine. Plays an important role in purine metabolism and in adenosine homeostasis. Modulates signaling by extracellular adenosine, and so contributes indirectly to cellular signaling events. Acts as a positive regulator of T-cell coactivation, by binding DPP4. Its interaction with DPP4 regulates lymphocyte-epithelial cell adhesion. Enhances dendritic cell immunogenicity by affecting dendritic cell costimulatory molecule expression and cytokines and chemokines secretion. Enhances CD4+ T-cell differentiation and proliferation. Acts as a positive modulator of adenosine receptors ADORA1 and ADORA2A, by enhancing their ligand affinity via conformational change. Stimulates plasminogen activation. Plays a role in male fertility. Plays a protective role in early postimplantation embryonic development. Also responsible for the deamination of cordycepin (3'-deoxyadenosine), a fungal natural product that shows antitumor, antibacterial, antifungal, antivirus, and immune regulation properties. In Rattus norvegicus (Rat), this protein is Adenosine deaminase (Ada).